The primary structure comprises 462 residues: Centrosomal protein of 55 kDa (462 aa).

Residues 1-11 (MSSRSPKDLIK) are compositionally biased toward basic and acidic residues. The disordered stretch occupies residues 1 to 26 (MSSRSPKDLIKSKWGSRPSSSKSDTA). Positions 12 to 23 (SKWGSRPSSSKS) are enriched in low complexity. Residues 50–400 (KMAEKGRSRL…TQLESLKQLH (351 aa)) are a coiled coil. Phosphoserine is present on residues S96 and S99. An interaction with TSG101 region spans residues 157 to 235 (ANCFNSSMNS…EGYLQVEKQK (79 aa)). The interaction with PDCD6IP stretch occupies residues 160–214 (FNSSMNSIHEKEMQLKDALEKNQQWLVYDQQREAYVKGLLAKIFELEKRTETAAA). The segment at 354 to 462 (QMQACTLDFE…LLVHVEYCMK (109 aa)) is required for localization to the interphase centrosome and to the midbody during cytokinesis. The disordered stretch occupies residues 410–430 (PLQREPESRVKATSPKSPSAA). A phosphoserine mark is found at S423, S426, and S428. At S434 the chain carries Phosphoserine; by PLK1.

As to quaternary structure, homodimer. Interacts (phosphorylated on Ser-423 and Ser-426) with PLK1; the interaction is indirect via the MTMR3:MTMR4 heterooligomer, occurs during early mitosis, regulates the phosphorylation of CEP55 by PLK1 and its recruitment to the midbody where it can mediate cell abscission. Interacts with AKAP9/CG-NAP; the interaction occurs in interphase and is lost upon mitotic entry. Interacts with PCNT/Kendrin; the interaction occurs in interphase and is lost upon mitotic entry. Directly interacts with PDCD6IP; this interaction is required for PDCD6IP targeting to the midbody; CEP55 binds PDCD6IP in a 2:1 stoichiometry; PDCD6IP competes with TSG101 for the same binding site. Interacts with TSG101; TSG101 competes with PDCD6IP for the same binding site; interaction is required for cytokinesis. Interacts with MVB12A, VPS37B, VPS37C and VPS28. In terms of processing, there is a hierachy of phosphorylation, where both Ser-423 and Ser-426 are phosphorylated at the onset of mitosis, prior to Ser-434. Phosphorylation at Ser-423 and Ser-426 is required for dissociation from the centrosome at the G2/M boundary. Phosphorylation at the 3 sites, Ser-423, Ser-426 and Ser-434, is required for protein function at the final stages of cell division to complete cytokinesis successfully.

The protein resides in the cytoplasm. It is found in the cytoskeleton. The protein localises to the microtubule organizing center. It localises to the centrosome. Its subcellular location is the centriole. The protein resides in the cleavage furrow. It is found in the midbody. The protein localises to the midbody ring. Plays a role in mitotic exit and cytokinesis. Recruits PDCD6IP and TSG101 to midbody during cytokinesis. Required for successful completion of cytokinesis. Not required for microtubule nucleation. Plays a role in the development of the brain and kidney. This Mus musculus (Mouse) protein is Centrosomal protein of 55 kDa.